The primary structure comprises 149 residues: 18 kDa antigen 1 (149 aa).

Positions Thr21 to Gly131 constitute a sHSP domain.

It belongs to the small heat shock protein (HSP20) family.

In terms of biological role, not known. This protein is one of the major immune reactive proteins in mycobacteria. The polypeptide is 18 kDa antigen 1 (Mycobacterium intracellulare).